A 476-amino-acid chain; its full sequence is Probable cytosolic Fe-S cluster assembly factor GF22738 (476 aa).

[4Fe-4S] cluster contacts are provided by Cys23, Cys68, Cys71, Cys74, Cys187, Cys243, Cys395, and Cys399.

This sequence belongs to the NARF family.

Component of the cytosolic iron-sulfur (Fe/S) protein assembly machinery. Required for maturation of extramitochondrial Fe/S proteins. This Drosophila ananassae (Fruit fly) protein is Probable cytosolic Fe-S cluster assembly factor GF22738.